The following is a 390-amino-acid chain: Phosphoglycerate kinase (390 aa).

Substrate-binding positions include 21 to 23, arginine 36, 59 to 62, arginine 112, and arginine 145; these read DLN and HLGR. Residues lysine 196, glutamate 317, and 343 to 346 each bind ATP; that span reads GGDT.

This sequence belongs to the phosphoglycerate kinase family. As to quaternary structure, monomer.

The protein localises to the cytoplasm. The catalysed reaction is (2R)-3-phosphoglycerate + ATP = (2R)-3-phospho-glyceroyl phosphate + ADP. It participates in carbohydrate degradation; glycolysis; pyruvate from D-glyceraldehyde 3-phosphate: step 2/5. In Cellvibrio japonicus (strain Ueda107) (Pseudomonas fluorescens subsp. cellulosa), this protein is Phosphoglycerate kinase.